A 380-amino-acid chain; its full sequence is Cysteine protease ATG4A (380 aa).

The active-site Nucleophile is Cys60. Catalysis depends on residues Asp262 and His264. The LIR motif lies at 375–378 (FEIL).

The protein belongs to the peptidase C54 family.

Its subcellular location is the cytoplasm. The enzyme catalyses [protein]-C-terminal L-amino acid-glycyl-phosphatidylethanolamide + H2O = [protein]-C-terminal L-amino acid-glycine + a 1,2-diacyl-sn-glycero-3-phosphoethanolamine. In terms of biological role, cysteine protease that plays a key role in autophagy by mediating both proteolytic activation and delipidation of ATG8 family proteins. The protease activity is required for proteolytic activation of ATG8 family proteins: cleaves the C-terminal amino acid of ATG8 proteins to reveal a C-terminal glycine. Exposure of the glycine at the C-terminus is essential for ATG8 proteins conjugation to phosphatidylethanolamine (PE) and insertion to membranes, which is necessary for autophagy. Protease activity is also required to counteract formation of high-molecular weight conjugates of ATG8 proteins (ATG8ylation): acts as a deubiquitinating-like enzyme that removes ATG8 conjugated to other proteins, such as ATG3. In addition to the protease activity, also mediates delipidation of ATG8 family proteins. Catalyzes delipidation of PE-conjugated forms of ATG8 proteins during macroautophagy. The polypeptide is Cysteine protease ATG4A (Gallus gallus (Chicken)).